The following is an 89-amino-acid chain: Small ribosomal subunit protein uS15 (89 aa).

Residues 1–11 show a composition bias toward basic and acidic residues; sequence MSITAERKAEV. Residues 1 to 25 form a disordered region; that stretch reads MSITAERKAEVIKTNARKSGDTGSP.

Belongs to the universal ribosomal protein uS15 family. Part of the 30S ribosomal subunit. Forms a bridge to the 50S subunit in the 70S ribosome, contacting the 23S rRNA.

Its function is as follows. One of the primary rRNA binding proteins, it binds directly to 16S rRNA where it helps nucleate assembly of the platform of the 30S subunit by binding and bridging several RNA helices of the 16S rRNA. Functionally, forms an intersubunit bridge (bridge B4) with the 23S rRNA of the 50S subunit in the ribosome. The chain is Small ribosomal subunit protein uS15 from Nitrobacter hamburgensis (strain DSM 10229 / NCIMB 13809 / X14).